The primary structure comprises 903 residues: Protein translocase subunit SecA (903 aa).

ATP is bound by residues Gln89, 107–111 (GEGKT), and Asp502. Cys886, Cys888, Cys897, and His898 together coordinate Zn(2+).

It belongs to the SecA family. Monomer and homodimer. Part of the essential Sec protein translocation apparatus which comprises SecA, SecYEG and auxiliary proteins SecDF-YajC and YidC. Zn(2+) is required as a cofactor.

Its subcellular location is the cell inner membrane. It is found in the cytoplasm. The enzyme catalyses ATP + H2O + cellular proteinSide 1 = ADP + phosphate + cellular proteinSide 2.. Its function is as follows. Part of the Sec protein translocase complex. Interacts with the SecYEG preprotein conducting channel. Has a central role in coupling the hydrolysis of ATP to the transfer of proteins into and across the cell membrane, serving both as a receptor for the preprotein-SecB complex and as an ATP-driven molecular motor driving the stepwise translocation of polypeptide chains across the membrane. The chain is Protein translocase subunit SecA from Rhizobium meliloti (strain 1021) (Ensifer meliloti).